A 261-amino-acid chain; its full sequence is Cytochrome c oxidase subunit 3 (261 aa).

The Mitochondrial matrix portion of the chain corresponds to 1–15 (MTHQTHAYHMVNPSP). Residues 16–34 (WPLTGALSALLMTSGLIMW) traverse the membrane as a helical segment. Residues 35-40 (FHFNST) lie on the Mitochondrial intermembrane side of the membrane. A helical transmembrane segment spans residues 41-66 (ILLMLGLTTNMLTMYQWWRDIIREST). Topologically, residues 67–72 (FQGHHT) are mitochondrial matrix. A helical transmembrane segment spans residues 73-105 (PTVQKGLRYGMILFIISEVLFFTGFFWAFYHSS). Residues 106–128 (LAPTPELGGCWPPTGIHPLNPLE) lie on the Mitochondrial intermembrane side of the membrane. A helical transmembrane segment spans residues 129-152 (VPLLNTSVLLASGVSITWAHHSLM). Over 153 to 155 (EGN) the chain is Mitochondrial matrix. A helical membrane pass occupies residues 156–183 (RNHMLQALFITIALGVYFTLLQASEYYE). Topologically, residues 184-190 (APFTISD) are mitochondrial intermembrane. Residues 191–223 (GVYGSTFFVATGFHGLHVIIGSTFLIVCFFRQL) traverse the membrane as a helical segment. Residues 224–232 (KFHFTSSHH) lie on the Mitochondrial matrix side of the membrane. Residues 233-256 (FGFEAAAWYWHFVDVVWLFLYVSI) traverse the membrane as a helical segment. Residues 257–261 (YWWGS) are Mitochondrial intermembrane-facing.

Belongs to the cytochrome c oxidase subunit 3 family. As to quaternary structure, component of the cytochrome c oxidase (complex IV, CIV), a multisubunit enzyme composed of 14 subunits. The complex is composed of a catalytic core of 3 subunits MT-CO1, MT-CO2 and MT-CO3, encoded in the mitochondrial DNA, and 11 supernumerary subunits COX4I, COX5A, COX5B, COX6A, COX6B, COX6C, COX7A, COX7B, COX7C, COX8 and NDUFA4, which are encoded in the nuclear genome. The complex exists as a monomer or a dimer and forms supercomplexes (SCs) in the inner mitochondrial membrane with NADH-ubiquinone oxidoreductase (complex I, CI) and ubiquinol-cytochrome c oxidoreductase (cytochrome b-c1 complex, complex III, CIII), resulting in different assemblies (supercomplex SCI(1)III(2)IV(1) and megacomplex MCI(2)III(2)IV(2)).

The protein resides in the mitochondrion inner membrane. It catalyses the reaction 4 Fe(II)-[cytochrome c] + O2 + 8 H(+)(in) = 4 Fe(III)-[cytochrome c] + 2 H2O + 4 H(+)(out). Component of the cytochrome c oxidase, the last enzyme in the mitochondrial electron transport chain which drives oxidative phosphorylation. The respiratory chain contains 3 multisubunit complexes succinate dehydrogenase (complex II, CII), ubiquinol-cytochrome c oxidoreductase (cytochrome b-c1 complex, complex III, CIII) and cytochrome c oxidase (complex IV, CIV), that cooperate to transfer electrons derived from NADH and succinate to molecular oxygen, creating an electrochemical gradient over the inner membrane that drives transmembrane transport and the ATP synthase. Cytochrome c oxidase is the component of the respiratory chain that catalyzes the reduction of oxygen to water. Electrons originating from reduced cytochrome c in the intermembrane space (IMS) are transferred via the dinuclear copper A center (CU(A)) of subunit 2 and heme A of subunit 1 to the active site in subunit 1, a binuclear center (BNC) formed by heme A3 and copper B (CU(B)). The BNC reduces molecular oxygen to 2 water molecules using 4 electrons from cytochrome c in the IMS and 4 protons from the mitochondrial matrix. The polypeptide is Cytochrome c oxidase subunit 3 (MT-CO3) (Aepyceros melampus (Impala)).